A 305-amino-acid chain; its full sequence is UDP-3-O-acyl-N-acetylglucosamine deacetylase (305 aa).

Residues His-79, His-238, and Asp-242 each contribute to the Zn(2+) site. His-265 acts as the Proton donor in catalysis.

The protein belongs to the LpxC family. Zn(2+) is required as a cofactor.

It carries out the reaction a UDP-3-O-[(3R)-3-hydroxyacyl]-N-acetyl-alpha-D-glucosamine + H2O = a UDP-3-O-[(3R)-3-hydroxyacyl]-alpha-D-glucosamine + acetate. It functions in the pathway glycolipid biosynthesis; lipid IV(A) biosynthesis; lipid IV(A) from (3R)-3-hydroxytetradecanoyl-[acyl-carrier-protein] and UDP-N-acetyl-alpha-D-glucosamine: step 2/6. In terms of biological role, catalyzes the hydrolysis of UDP-3-O-myristoyl-N-acetylglucosamine to form UDP-3-O-myristoylglucosamine and acetate, the committed step in lipid A biosynthesis. The polypeptide is UDP-3-O-acyl-N-acetylglucosamine deacetylase (Citrobacter koseri (strain ATCC BAA-895 / CDC 4225-83 / SGSC4696)).